Here is a 265-residue protein sequence, read N- to C-terminus: Apolipoprotein A-I (265 aa).

An N-terminal signal peptide occupies residues 1–16 (MKAAVLIWLFLMGSQA). 2 consecutive repeat copies span residues 66–87 (LKLLDNWDSLTSTVNKLREQLG) and 88–109 (PVTQEFWDNLEKETEELRQEMS). Positions 66–265 (LKLLDNWDSL…EEYTKKLSSQ (200 aa)) are 10 X approximate tandem repeats. M108 bears the Methionine sulfoxide mark. One copy of the 3; half-length repeat lies at 110 to 120 (KDLEEVKAQVQ). Repeat copies occupy residues 121–142 (PYLDNFQKNWQEEMNLYSQKLE), 143–164 (PLRTELQEGALQKLQDLQEKLS), 165–186 (PLAEQVRDRARAHVNTLRTQLA), 187–208 (PYSDELRQRLATRLEALKENSG), and 209–230 (ASLAEYHAKASEHLSALGEKAK). A Methionine sulfoxide modification is found at M134. Residues 231–241 (PALDDLRQGLL) form a 9; half-length repeat. Repeat unit 10 spans residues 242–265 (PVLESFKVSFLSALEEYTKKLSSQ).

Belongs to the apolipoprotein A1/A4/E family. Homodimer. Interacts with APOA1BP and CLU. Component of a sperm activating protein complex (SPAP), consisting of APOA1, an immunoglobulin heavy chain, an immunoglobulin light chain and albumin. Interacts with NDRG1. Interacts with SCGB3A2. Interacts with NAXE and YJEFN3. Glycosylated. Post-translationally, palmitoylated. In terms of processing, phosphorylation sites are present in the extracellular medium.

Its subcellular location is the secreted. Functionally, participates in the reverse transport of cholesterol from tissues to the liver for excretion by promoting cholesterol efflux from tissues and by acting as a cofactor for the lecithin cholesterol acyltransferase (LCAT). As part of the SPAP complex, activates spermatozoa motility. The sequence is that of Apolipoprotein A-I (APOA1) from Aotus nancymaae (Ma's night monkey).